A 37-amino-acid polypeptide reads, in one-letter code: Large ribosomal subunit protein bL36 (37 aa).

This sequence belongs to the bacterial ribosomal protein bL36 family.

In Heliobacterium modesticaldum (strain ATCC 51547 / Ice1), this protein is Large ribosomal subunit protein bL36.